Consider the following 186-residue polypeptide: Probable chorismate pyruvate-lyase (186 aa).

Substrate-binding residues include arginine 78, leucine 116, and glutamate 175.

It belongs to the UbiC family.

It localises to the cytoplasm. It catalyses the reaction chorismate = 4-hydroxybenzoate + pyruvate. The protein operates within cofactor biosynthesis; ubiquinone biosynthesis. In terms of biological role, removes the pyruvyl group from chorismate, with concomitant aromatization of the ring, to provide 4-hydroxybenzoate (4HB) for the ubiquinone pathway. This chain is Probable chorismate pyruvate-lyase, found in Psychromonas ingrahamii (strain DSM 17664 / CCUG 51855 / 37).